The chain runs to 294 residues: MLERLSGQTRLTALLAAPARHSLSPKMHNAAYAKLGLDYAYLAFEVDNSGLAAAVQGMRALGICGANVSMPNKQAIVPLLDELSPAAALAGAVNTVVNTDGKGHLVGHITDGTGAIRSLAEEGVAIKDQIITIAGAGGAGTAIAVQLGLDGAKEIRLFNRKTATFKQAKQVLKGINAKTSALASLQDLADDRAFRRSIAESSIYIDATGVGMKPLEEHSLITDPALIRPDLVVFDLVYHPAETKLLAFAREHGAKKVMNGLGMLLYQGAEAFKLMTGEDMPVAYIRELLCRDKE.

Shikimate contacts are provided by residues S22–S24 and S69. K73 functions as the Proton acceptor in the catalytic mechanism. N94 and D111 together coordinate shikimate. Residues G135–A139 and L236 each bind NADP(+). Shikimate is bound at residue Y238. Residue G260 coordinates NADP(+).

This sequence belongs to the shikimate dehydrogenase family. Homodimer.

The enzyme catalyses shikimate + NADP(+) = 3-dehydroshikimate + NADPH + H(+). Its pathway is metabolic intermediate biosynthesis; chorismate biosynthesis; chorismate from D-erythrose 4-phosphate and phosphoenolpyruvate: step 4/7. In terms of biological role, involved in the biosynthesis of the chorismate, which leads to the biosynthesis of aromatic amino acids. Catalyzes the reversible NADPH linked reduction of 3-dehydroshikimate (DHSA) to yield shikimate (SA). The polypeptide is Shikimate dehydrogenase (NADP(+)) (Streptococcus equi subsp. zooepidemicus (strain H70)).